A 66-amino-acid polypeptide reads, in one-letter code: Alpha-conotoxin GID (66 aa).

A signal peptide spans 1–21 (MGMRMMFTVFLLVVLAATIVS). The propeptide occupies 22–44 (FTSDRASDGRNVAAKAFHRIGRT). Positions 45-48 (IRDE) are N-terminal tail important for activity on alpha-3-beta-2/CHRNA3-CHRNB2 and alpha-4-beta-2/CHRNA4-CHRNB2 nAChR. Position 48 is a 4-carboxyglutamate (glutamate 48). 2 disulfides stabilise this stretch: cysteine 49-cysteine 55 and cysteine 50-cysteine 63. The interval 51 to 53 (SNP) is ser-Xaa-Pro motif, crucial for potent interaction with nAChR. Proline 60 is subject to 4-hydroxyproline.

This sequence belongs to the conotoxin A superfamily. In terms of processing, gamma-carboxyglutamation of Glu-48 seems to be not important for nAChR inhibition, since synthetic peptides without this modification do not show change in inhibition of alpha-7/CHRNA7 and alpha-3-beta-2/CHRNA3-CHRNB2 nAChR and show a 2.3-fold increase in inhibition of alpha-4-beta-2/CHRNA4-CHRNB2 nAChR. Hydroxylation of Pro-60 seems to be important for nAChR inhibition, since synthetic peptides without this modification show a small decrease in inhibition of alpha-7/CHRNA7 and alpha-3-beta-2/CHRNA3-CHRNB2 nAChR and a very important decrease in inhibition of alpha-4-beta-2/CHRNA4-CHRNB2 nAChR. Post-translationally, an amidation of Cys-63 increases potency against alpha-7/CHRNA7 (2.6-fold) and alpha-3-beta-2/CHRNA3-CHRNB2 (2-fold) nAChR. On the other hand, the peptide has no more activity on alpha-4-beta-2/CHRNA4-CHRNB2 nAChR with an amidated Cys-63. In terms of tissue distribution, expressed by the venom duct.

The protein resides in the secreted. Alpha-conotoxins act on postsynaptic membranes, they bind to the nicotinic acetylcholine receptors (nAChR) and thus inhibit them. This toxin reversibly blocks alpha-3-beta-2/CHRNA3-CHRNB2 (IC(50)=3.1-5.1 nM), alpha-7/CHRNA7 (IC(50)=4.5-5.1 nM), and alpha-4-beta-2/CHRNA4-CHRNB2 (IC(50)=128.6-390 nM) nAChRs. This is Alpha-conotoxin GID from Conus geographus (Geography cone).